A 664-amino-acid chain; its full sequence is PAN2-PAN3 deadenylation complex subunit PAN3 (664 aa).

Disordered regions lie at residues 1–27 (MATT…GREN) and 54–134 (DPHK…PGTM). The C3H1-type zinc finger occupies 27–56 (NAKDTLCRNVTIYGRCRYEDKGCAFNHDPH). The segment covering 74-96 (DSPSFTPSILSSNGSSPTSQSAT) has biased composition (polar residues). The span at 115 to 131 (PRSISSRSNSSTPTTRP) shows a compositional bias: low complexity. Residues 265–525 (QTLPNTQLPA…NIDIFITGIS (261 aa)) form a pseudokinase domain region. Residues arginine 317, 366–373 (DYHPLSKT), and 425–426 (SK) contribute to the ATP site. A coiled-coil region spans residues 526-564 (STLMSTFDSALHLDDQLTSDLSRELENGRLVRLMTKLNF). The tract at residues 565-664 (VNERPEYEHD…LKPSASRRLH (100 aa)) is knob domain.

The protein belongs to the protein kinase superfamily. PAN3 family. Homodimer. Forms a heterotrimer with a catalytic subunit pan2 to form the poly(A)-nuclease (PAN) deadenylation complex. Interacts (via PAM-2 motif) with poly(A)-binding protein pab1 (via PABC domain), conferring substrate specificity of the enzyme complex.

It localises to the cytoplasm. In terms of biological role, regulatory subunit of the poly(A)-nuclease (PAN) deadenylation complex, one of two cytoplasmic mRNA deadenylases involved in mRNA turnover. PAN specifically shortens poly(A) tails of RNA and the activity is stimulated by poly(A)-binding protein pab1. PAN deadenylation is followed by rapid degradation of the shortened mRNA tails by the CCR4-NOT complex. Deadenylated mRNAs are then degraded by two alternative mechanisms, namely exosome-mediated 3'-5' exonucleolytic degradation, or deadenylation-dependent mRNA decaping and subsequent 5'-3' exonucleolytic degradation by xrn1. May also be involved in post-transcriptional maturation of mRNA poly(A) tails. pan3 acts as a positive regulator for PAN activity, recruiting the catalytic subunit pan2 to mRNA via its interaction with RNA and with pab1. This is PAN2-PAN3 deadenylation complex subunit PAN3 from Aspergillus niger (strain ATCC MYA-4892 / CBS 513.88 / FGSC A1513).